The primary structure comprises 462 residues: L-seryl-tRNA(Sec) selenium transferase (462 aa).

An N6-(pyridoxal phosphate)lysine modification is found at K292.

It belongs to the SelA family. Pyridoxal 5'-phosphate serves as cofactor.

It localises to the cytoplasm. The catalysed reaction is L-seryl-tRNA(Sec) + selenophosphate + H(+) = L-selenocysteinyl-tRNA(Sec) + phosphate. The protein operates within aminoacyl-tRNA biosynthesis; selenocysteinyl-tRNA(Sec) biosynthesis; selenocysteinyl-tRNA(Sec) from L-seryl-tRNA(Sec) (bacterial route): step 1/1. Functionally, converts seryl-tRNA(Sec) to selenocysteinyl-tRNA(Sec) required for selenoprotein biosynthesis. The sequence is that of L-seryl-tRNA(Sec) selenium transferase from Geobacter metallireducens (strain ATCC 53774 / DSM 7210 / GS-15).